The chain runs to 205 residues: Thymidine kinase (205 aa).

ATP is bound by residues 9-16 (SAMNAGKS) and 87-90 (DECQ). The active-site Proton acceptor is Glu88. Residues Cys145, Cys147, Cys182, and His185 each contribute to the Zn(2+) site.

Belongs to the thymidine kinase family. As to quaternary structure, homotetramer.

It localises to the cytoplasm. It catalyses the reaction thymidine + ATP = dTMP + ADP + H(+). The sequence is that of Thymidine kinase from Shigella dysenteriae serotype 1 (strain Sd197).